Reading from the N-terminus, the 210-residue chain is Cell division protein SepF (210 aa).

This sequence belongs to the SepF family. In terms of assembly, homodimer. Interacts with FtsZ.

The protein resides in the cytoplasm. Its function is as follows. Cell division protein that is part of the divisome complex and is recruited early to the Z-ring. Probably stimulates Z-ring formation, perhaps through the cross-linking of FtsZ protofilaments. Its function overlaps with FtsA. The chain is Cell division protein SepF from Mycobacterium leprae (strain Br4923).